The chain runs to 339 residues: Dihydroorotate dehydrogenase (quinone) (339 aa).

Residues 61–65 (AGLDK) and T85 each bind FMN. Residue K65 participates in substrate binding. 110 to 114 (NRMGF) is a binding site for substrate. FMN-binding residues include N138 and N171. N171 lines the substrate pocket. The active-site Nucleophile is the S174. Position 176 (N176) interacts with substrate. K216 and T244 together coordinate FMN. Substrate is bound at residue 245–246 (NT). FMN is bound by residues G267, G296, and 317-318 (YS).

This sequence belongs to the dihydroorotate dehydrogenase family. Type 2 subfamily. As to quaternary structure, monomer. The cofactor is FMN.

The protein localises to the cell membrane. It catalyses the reaction (S)-dihydroorotate + a quinone = orotate + a quinol. It participates in pyrimidine metabolism; UMP biosynthesis via de novo pathway; orotate from (S)-dihydroorotate (quinone route): step 1/1. Catalyzes the conversion of dihydroorotate to orotate with quinone as electron acceptor. The sequence is that of Dihydroorotate dehydrogenase (quinone) from Pseudomonas fluorescens (strain ATCC BAA-477 / NRRL B-23932 / Pf-5).